Consider the following 263-residue polypeptide: Triosephosphate isomerase (263 aa).

A substrate-binding site is contributed by 10–12; it reads NWK. His104 (electrophile) is an active-site residue. Residue Glu176 is the Proton acceptor of the active site. Substrate is bound by residues Gly182, Ser221, and 242–243; that span reads GG.

This sequence belongs to the triosephosphate isomerase family. As to quaternary structure, homodimer.

It is found in the cytoplasm. The catalysed reaction is D-glyceraldehyde 3-phosphate = dihydroxyacetone phosphate. The protein operates within carbohydrate biosynthesis; gluconeogenesis. It participates in carbohydrate degradation; glycolysis; D-glyceraldehyde 3-phosphate from glycerone phosphate: step 1/1. Functionally, involved in the gluconeogenesis. Catalyzes stereospecifically the conversion of dihydroxyacetone phosphate (DHAP) to D-glyceraldehyde-3-phosphate (G3P). This Haemophilus influenzae (strain PittEE) protein is Triosephosphate isomerase.